Here is a 309-residue protein sequence, read N- to C-terminus: 2-phospho-L-lactate transferase (309 aa).

7,8-didemethyl-8-hydroxy-5-deazariboflavin is bound by residues Asp-50 and Arg-89.

It belongs to the CofD family. Homodimer. It depends on Mg(2+) as a cofactor.

The catalysed reaction is (2S)-lactyl-2-diphospho-5'-guanosine + 7,8-didemethyl-8-hydroxy-5-deazariboflavin = oxidized coenzyme F420-0 + GMP + H(+). The protein operates within cofactor biosynthesis; coenzyme F420 biosynthesis. Functionally, catalyzes the transfer of the 2-phospholactate moiety from (2S)-lactyl-2-diphospho-5'-guanosine to 7,8-didemethyl-8-hydroxy-5-deazariboflavin (FO) with the formation of oxidized coenzyme F420-0 and GMP. The sequence is that of 2-phospho-L-lactate transferase from Methanococcus maripaludis (strain DSM 14266 / JCM 13030 / NBRC 101832 / S2 / LL).